A 394-amino-acid polypeptide reads, in one-letter code: MNKKSIRDVDLKGKRVFCRVDFNVPMKEGKITDETRIRAALPTIQYLVEQGAKVILASHLGRPKGQAVEELRLTPVAARLGELLGKDVKKADEAFGPVAQEMVAAMNEGDVLVLENVRFYAGEEKNDAELAKEFAALADIFVNDAFGAAHRAHASTAGIADYLPAVSGLLMEKELDVLGKALSNPERPFTAIIGGAKVKDKIGVIRHLLDKVDNLIIGGGLAYTFVKALGHEIGLSLCEDDKIELAKEFMQLAKEKGVNFYMPVDVVITEEFSETATTQIVGIDSIPSNWEGVDIGPKTREIYADVIKNSKLVVWNGPMGVFEMTPFAEGTKAVGQALADAEDTYSVIGGGDSAAAVEKFGMADKMSHISTGGGASLEFMEGKELPGVVCLNDK.

Substrate-binding positions include 21-23, arginine 36, 59-62, arginine 118, and arginine 151; these read DFN and HLGR. Serine 183 carries the post-translational modification Phosphoserine. The ATP site is built by lysine 201 and glycine 292. At threonine 299 the chain carries Phosphothreonine. ATP contacts are provided by residues glutamate 323 and 350-353; that span reads GGDS.

Belongs to the phosphoglycerate kinase family. In terms of assembly, monomer.

The protein localises to the cytoplasm. The enzyme catalyses (2R)-3-phosphoglycerate + ATP = (2R)-3-phospho-glyceroyl phosphate + ADP. Its pathway is carbohydrate degradation; glycolysis; pyruvate from D-glyceraldehyde 3-phosphate: step 2/5. The sequence is that of Phosphoglycerate kinase from Bacillus cereus (strain G9842).